Here is a 445-residue protein sequence, read N- to C-terminus: Scarecrow-like protein 18 (445 aa).

A compositionally biased stretch (low complexity) spans 1–21 (MLTSFKSSSSSSEDATATTTE). The interval 1 to 26 (MLTSFKSSSSSSEDATATTTENPPPL) is disordered. The GRAS domain maps to 32–445 (SAATSASHHL…RPLFSVSSWK (414 aa)). Residues 39–127 (HHLRRLLFTA…STVFTSSVCK (89 aa)) are leucine repeat I (LRI). Residues 146–217 (YLWLNQLTPF…SPPPSLRITG (72 aa)) form a VHIID region. The short motif at 179-183 (LHILD) is the VHIID element. The interval 227-259 (RTGDRLTRFADSLGLQFQFHTLVIVEEDLAGLL) is leucine repeat II (LRII). The PFYRE stretch occupies residues 275–366 (IAVNCVHFLH…QRWFGKEILD (92 aa)). The tract at residues 369–445 (AAEETERKQR…RPLFSVSSWK (77 aa)) is SAW.

Belongs to the GRAS family. In terms of tissue distribution, expressed in roots and flowers.

Its subcellular location is the nucleus. Functionally, probable transcription factor required for axillary (lateral) shoot meristem formation during vegetative development. Seems to act upstream of REVOLUTA. The chain is Scarecrow-like protein 18 (SCL18) from Arabidopsis thaliana (Mouse-ear cress).